We begin with the raw amino-acid sequence, 334 residues long: Anthranilate phosphoribosyltransferase (334 aa).

Residues Gly-79, 82–83, Ser-87, 89–92, 107–115, and Ser-119 each bind 5-phospho-alpha-D-ribose 1-diphosphate; these read GD, NIST, and KHGNRSISS. Gly-79 contacts anthranilate. Ser-91 is a Mg(2+) binding site. Residue Asn-110 coordinates anthranilate. Residue Arg-165 participates in anthranilate binding. Mg(2+) contacts are provided by Asp-224 and Glu-225.

This sequence belongs to the anthranilate phosphoribosyltransferase family. In terms of assembly, homodimer. It depends on Mg(2+) as a cofactor.

It carries out the reaction N-(5-phospho-beta-D-ribosyl)anthranilate + diphosphate = 5-phospho-alpha-D-ribose 1-diphosphate + anthranilate. The protein operates within amino-acid biosynthesis; L-tryptophan biosynthesis; L-tryptophan from chorismate: step 2/5. Functionally, catalyzes the transfer of the phosphoribosyl group of 5-phosphorylribose-1-pyrophosphate (PRPP) to anthranilate to yield N-(5'-phosphoribosyl)-anthranilate (PRA). This Streptococcus pneumoniae (strain 70585) protein is Anthranilate phosphoribosyltransferase.